Reading from the N-terminus, the 222-residue chain is Ribulose-phosphate 3-epimerase (222 aa).

Ser7 serves as a coordination point for substrate. Residues His32, Asp34, and His65 each contribute to the a divalent metal cation site. The active-site Proton acceptor is Asp34. Substrate is bound by residues His65, 141–144, 174–176, and 196–197; these read GFSG, DGG, and GS. Residue Asp174 coordinates a divalent metal cation. Asp174 (proton donor) is an active-site residue.

The protein belongs to the ribulose-phosphate 3-epimerase family. The cofactor is a divalent metal cation.

It carries out the reaction D-ribulose 5-phosphate = D-xylulose 5-phosphate. It functions in the pathway carbohydrate degradation. In terms of biological role, catalyzes the reversible epimerization of D-ribulose 5-phosphate to D-xylulose 5-phosphate. The chain is Ribulose-phosphate 3-epimerase from Aquifex aeolicus (strain VF5).